The primary structure comprises 167 residues: Alpha-crystallin A chain (167 aa).

Met-1 bears the N-acetylmethionine mark. One can recognise a sHSP domain in the interval 47-158; it reads YYRQSFFRGF…GERPIPVSRE (112 aa). Positions 94, 96, 101, and 148 each coordinate Zn(2+). Positions 143–167 are disordered; it reads SLDSSHGERPIPVSREEKPTSAPSS. The span at 147 to 161 shows a compositional bias: basic and acidic residues; it reads SHGERPIPVSREEKP. Ser-156 carries O-linked (GlcNAc) serine glycosylation.

Belongs to the small heat shock protein (HSP20) family. As to quaternary structure, heteropolymer composed of three CRYAA and one CRYAB subunits. Inter-subunit bridging via zinc ions enhances stability, which is crucial as there is no protein turn over in the lens. Can also form homodimers and homotetramers (dimers of dimers) which serve as the building blocks of homooligomers. Within homooligomers, the zinc-binding motif is created from residues of 3 different molecules. His-94 and Glu-96 from one molecule are ligands of the zinc ion, and His-101 and His-148 residues from additional molecules complete the site with tetrahedral coordination geometry.

Its subcellular location is the cytoplasm. It is found in the nucleus. Functionally, contributes to the transparency and refractive index of the lens. May act as a chaperone, preventing aggregation of various proteins under a wide range of stress conditions. The chain is Alpha-crystallin A chain (CRYAA) from Pelophylax lessonae (Pool frog).